The sequence spans 758 residues: 5-methyltetrahydropteroyltriglutamate--homocysteine methyltransferase (758 aa).

5-methyltetrahydropteroyltri-L-glutamate is bound by residues 17-20 (RELK) and Lys110. L-homocysteine is bound by residues 428–430 (IGS) and Glu481. Residues 428–430 (IGS) and Glu481 each bind L-methionine. 5-methyltetrahydropteroyltri-L-glutamate is bound by residues 512-513 (RC) and Trp558. Asp596 is an L-homocysteine binding site. Position 596 (Asp596) interacts with L-methionine. Glu602 is a binding site for 5-methyltetrahydropteroyltri-L-glutamate. Positions 638, 640, and 662 each coordinate Zn(2+). His691 acts as the Proton donor in catalysis. Cys723 serves as a coordination point for Zn(2+).

Belongs to the vitamin-B12 independent methionine synthase family. The cofactor is Zn(2+).

It catalyses the reaction 5-methyltetrahydropteroyltri-L-glutamate + L-homocysteine = tetrahydropteroyltri-L-glutamate + L-methionine. Its pathway is amino-acid biosynthesis; L-methionine biosynthesis via de novo pathway; L-methionine from L-homocysteine (MetE route): step 1/1. Functionally, catalyzes the transfer of a methyl group from 5-methyltetrahydrofolate to homocysteine resulting in methionine formation. The chain is 5-methyltetrahydropteroyltriglutamate--homocysteine methyltransferase from Thermosynechococcus vestitus (strain NIES-2133 / IAM M-273 / BP-1).